Consider the following 82-residue polypeptide: Large ribosomal subunit protein bL27 (82 aa).

The tract at residues M1 to G26 is disordered.

The protein belongs to the bacterial ribosomal protein bL27 family.

This Chlamydia felis (strain Fe/C-56) (Chlamydophila felis) protein is Large ribosomal subunit protein bL27.